The following is a 360-amino-acid chain: Protein Wnt-2 (360 aa).

Positions 1–26 (MNAPLGGIWLWLPLLLTWLTPEVSSS) are cleaved as a signal peptide. Disulfide bonds link Cys-76–Cys-87, Cys-127–Cys-135, Cys-137–Cys-157, Cys-206–Cys-220, Cys-208–Cys-215, Cys-278–Cys-309, Cys-294–Cys-304, Cys-308–Cys-348, Cys-324–Cys-339, Cys-326–Cys-336, and Cys-331–Cys-332. Ser-212 is lipidated: O-palmitoleoyl serine; by PORCN. Asn-295 is a glycosylation site (N-linked (GlcNAc...) asparagine).

This sequence belongs to the Wnt family. Palmitoleoylation is required for efficient binding to frizzled receptors. Depalmitoleoylation leads to Wnt signaling pathway inhibition.

The protein resides in the secreted. Its subcellular location is the extracellular space. The protein localises to the extracellular matrix. Ligand for members of the frizzled family of seven transmembrane receptors. Probable developmental protein. May be a signaling molecule which affects the development of discrete regions of tissues. Is likely to signal over only few cell diameters. In Eulemur macaco macaco (Black lemur), this protein is Protein Wnt-2 (WNT2).